Reading from the N-terminus, the 268-residue chain is Small ribosomal subunit protein uS2 (268 aa).

Residues 228 to 268 (QLDSEQDYEDFDESISDEYDDYEDEEEYEEQDLEVDASEDE) are disordered. The span at 231-268 (SEQDYEDFDESISDEYDDYEDEEEYEEQDLEVDASEDE) shows a compositional bias: acidic residues.

The protein belongs to the universal ribosomal protein uS2 family.

This is Small ribosomal subunit protein uS2 from Rippkaea orientalis (strain PCC 8801 / RF-1) (Cyanothece sp. (strain PCC 8801)).